Consider the following 267-residue polypeptide: Indole-3-glycerol phosphate synthase (267 aa).

This sequence belongs to the TrpC family.

The catalysed reaction is 1-(2-carboxyphenylamino)-1-deoxy-D-ribulose 5-phosphate + H(+) = (1S,2R)-1-C-(indol-3-yl)glycerol 3-phosphate + CO2 + H2O. It functions in the pathway amino-acid biosynthesis; L-tryptophan biosynthesis; L-tryptophan from chorismate: step 4/5. The protein is Indole-3-glycerol phosphate synthase of Cupriavidus necator (strain ATCC 17699 / DSM 428 / KCTC 22496 / NCIMB 10442 / H16 / Stanier 337) (Ralstonia eutropha).